Here is a 163-residue protein sequence, read N- to C-terminus: NADH-quinone oxidoreductase subunit I (163 aa).

2 consecutive 4Fe-4S ferredoxin-type domains span residues 54–84 (LRRYPNGEERCIACKLCEAVCPAMAITIESE) and 94–123 (TRYDIDLTKCIFCGFCEESCPVDSIVETRI). [4Fe-4S] cluster is bound by residues C64, C67, C70, C74, C103, C106, C109, and C113.

Belongs to the complex I 23 kDa subunit family. NDH-1 is composed of 14 different subunits. Subunits NuoA, H, J, K, L, M, N constitute the membrane sector of the complex. [4Fe-4S] cluster is required as a cofactor.

The protein localises to the cell inner membrane. The catalysed reaction is a quinone + NADH + 5 H(+)(in) = a quinol + NAD(+) + 4 H(+)(out). In terms of biological role, NDH-1 shuttles electrons from NADH, via FMN and iron-sulfur (Fe-S) centers, to quinones in the respiratory chain. The immediate electron acceptor for the enzyme in this species is believed to be ubiquinone. Couples the redox reaction to proton translocation (for every two electrons transferred, four hydrogen ions are translocated across the cytoplasmic membrane), and thus conserves the redox energy in a proton gradient. The chain is NADH-quinone oxidoreductase subunit I from Methylobacillus flagellatus (strain ATCC 51484 / DSM 6875 / VKM B-1610 / KT).